Here is a 415-residue protein sequence, read N- to C-terminus: Gamma-glutamyl phosphate reductase (415 aa).

The protein belongs to the gamma-glutamyl phosphate reductase family.

It is found in the cytoplasm. The enzyme catalyses L-glutamate 5-semialdehyde + phosphate + NADP(+) = L-glutamyl 5-phosphate + NADPH + H(+). It functions in the pathway amino-acid biosynthesis; L-proline biosynthesis; L-glutamate 5-semialdehyde from L-glutamate: step 2/2. Functionally, catalyzes the NADPH-dependent reduction of L-glutamate 5-phosphate into L-glutamate 5-semialdehyde and phosphate. The product spontaneously undergoes cyclization to form 1-pyrroline-5-carboxylate. In Clostridium perfringens (strain 13 / Type A), this protein is Gamma-glutamyl phosphate reductase.